The following is a 721-amino-acid chain: Polyribonucleotide nucleotidyltransferase (721 aa).

Mg(2+) contacts are provided by Asp-495 and Asp-501. The KH domain occupies 562–621 (PRLLSFRIDPELIGTVIGPGGRTIKGITERTNTKIDIEDGGIVTIASHDGAAAEAAQRII). The S1 motif domain maps to 631-699 (GEVFSGTITR…NRGRINLTLR (69 aa)). A disordered region spans residues 700–721 (GVPQNGEETQSEPAPTPVAPLN).

The protein belongs to the polyribonucleotide nucleotidyltransferase family. Mg(2+) serves as cofactor.

The protein localises to the cytoplasm. The enzyme catalyses RNA(n+1) + phosphate = RNA(n) + a ribonucleoside 5'-diphosphate. Involved in mRNA degradation. Catalyzes the phosphorolysis of single-stranded polyribonucleotides processively in the 3'- to 5'-direction. The chain is Polyribonucleotide nucleotidyltransferase from Prochlorococcus marinus (strain MIT 9303).